A 571-amino-acid polypeptide reads, in one-letter code: Urease subunit alpha (571 aa).

In terms of domain architecture, Urease spans 134 to 571 (GAIDTHIHFI…LPMAQRYFLF (438 aa)). Ni(2+) contacts are provided by histidine 139, histidine 141, and lysine 222. Lysine 222 carries the post-translational modification N6-carboxylysine. Histidine 224 contacts substrate. 2 residues coordinate Ni(2+): histidine 251 and histidine 277. Catalysis depends on histidine 325, which acts as the Proton donor. Aspartate 365 provides a ligand contact to Ni(2+).

The protein belongs to the metallo-dependent hydrolases superfamily. Urease alpha subunit family. As to quaternary structure, heterotrimer of UreA (gamma), UreB (beta) and UreC (alpha) subunits. Three heterotrimers associate to form the active enzyme. Ni cation is required as a cofactor. Post-translationally, carboxylation allows a single lysine to coordinate two nickel ions.

The protein localises to the cytoplasm. It catalyses the reaction urea + 2 H2O + H(+) = hydrogencarbonate + 2 NH4(+). The protein operates within nitrogen metabolism; urea degradation; CO(2) and NH(3) from urea (urease route): step 1/1. The sequence is that of Urease subunit alpha from Bordetella parapertussis (strain 12822 / ATCC BAA-587 / NCTC 13253).